The sequence spans 81 residues: Small ribosomal subunit protein bS18 (81 aa).

Belongs to the bacterial ribosomal protein bS18 family. Part of the 30S ribosomal subunit. Forms a tight heterodimer with protein bS6.

In terms of biological role, binds as a heterodimer with protein bS6 to the central domain of the 16S rRNA, where it helps stabilize the platform of the 30S subunit. The chain is Small ribosomal subunit protein bS18 from Chloroflexus aurantiacus (strain ATCC 29366 / DSM 635 / J-10-fl).